The primary structure comprises 313 residues: Porphobilinogen deaminase (313 aa).

Position 242 is an S-(dipyrrolylmethanemethyl)cysteine (C242).

It belongs to the HMBS family. Monomer. It depends on dipyrromethane as a cofactor.

The enzyme catalyses 4 porphobilinogen + H2O = hydroxymethylbilane + 4 NH4(+). It participates in porphyrin-containing compound metabolism; protoporphyrin-IX biosynthesis; coproporphyrinogen-III from 5-aminolevulinate: step 2/4. In terms of biological role, tetrapolymerization of the monopyrrole PBG into the hydroxymethylbilane pre-uroporphyrinogen in several discrete steps. The sequence is that of Porphobilinogen deaminase from Pseudomonas fluorescens (strain Pf0-1).